A 1385-amino-acid polypeptide reads, in one-letter code: DNA-directed RNA polymerase subunit beta'' (1385 aa).

The Zn(2+) site is built by cysteine 224, cysteine 294, cysteine 301, and cysteine 304.

It belongs to the RNA polymerase beta' chain family. RpoC2 subfamily. In terms of assembly, in plastids the minimal PEP RNA polymerase catalytic core is composed of four subunits: alpha, beta, beta', and beta''. When a (nuclear-encoded) sigma factor is associated with the core the holoenzyme is formed, which can initiate transcription. Requires Zn(2+) as cofactor.

It is found in the plastid. The protein localises to the chloroplast. It carries out the reaction RNA(n) + a ribonucleoside 5'-triphosphate = RNA(n+1) + diphosphate. In terms of biological role, DNA-dependent RNA polymerase catalyzes the transcription of DNA into RNA using the four ribonucleoside triphosphates as substrates. The polypeptide is DNA-directed RNA polymerase subunit beta'' (Illicium oligandrum (Star anise)).